Here is a 471-residue protein sequence, read N- to C-terminus: MGFLWTGTWIVVLMLHSSPIQAFPKPAGSQDKPLHNRELSAERPLNEQIAEAEADEIKKTYPPENKPGESNYSFVDNLNLLKAITEKEKNEKERQSVKISPNDNKLNVEDVDSTKNRRLIDDYDSTKSGLDRKFQDDPDGLHQLDGTPLTAEDIVQKIATRIYEENDRGVFDRIVSKLLNLGLITESQAHTLEDEVAEVLQKLISKEANNYEEELNKPTSKTESQTGKIPEKVTPMAAIQDAFTNGENDETVSNTLTLTNGLERRTKTYSEDNFEELQYFPNFYALLKSIDSEKEAKEKETLITIMKTLIDFVKMMVKYGTISPEEGVSYLENLDETIALQTKNKLEKNVTDNKSKLFAVPSEKSHEETDSTKEEAAKMEKEYGTLKDSTKDDDSNPRGKTDEHKGKTEAYLEAIRKNIDWLKKHNKKENKEDYDLSKMRDFINQQADAYVEKGILDKEEADAIKRIYSSL.

The signal sequence occupies residues Met-1–Ala-22. Disordered regions lie at residues Phe-23–Tyr-72 and Glu-86–Lys-105. A compositionally biased stretch (basic and acidic residues) spans Lys-32–Leu-45. The residue at position 40 (Ser-40) is a Phosphoserine. Ser-40 is a glycosylation site (O-linked (Xyl...) (chondroitin sulfate) serine). Asn-71 is a glycosylation site (N-linked (GlcNAc...) asparagine). The segment covering Glu-86 to Ser-96 has biased composition (basic and acidic residues). A glycan (N-linked (GlcNAc...) asparagine) is linked at Asn-353. The interval Leu-357 to Glu-409 is disordered. Basic and acidic residues predominate over residues Glu-363 to Glu-409. Phosphoserine is present on Ser-365.

As to quaternary structure, interacts with CHGA. Interacts with secretogranin II/SCG2. Interacts (via C-terminus) with CPE.

The protein resides in the cytoplasmic vesicle. It localises to the secretory vesicle. The protein localises to the secretory vesicle membrane. It is found in the secreted. Functionally, member of the granin protein family that regulates the biogenesis of secretory granules. Acts as a sorting receptor for intragranular proteins including chromogranin A/CHGA. May also play a role in angiogenesis. Promotes endothelial proliferation, migration and tube formation through MEK/ERK signaling pathway. This is Secretogranin-3 (SCG3) from Bos taurus (Bovine).